Reading from the N-terminus, the 328-residue chain is Sulfate adenylyltransferase subunit 2 (328 aa).

The disordered stretch occupies residues 305–328 (ERQGRVIDRDSTGSMERKKAEGYF).

It belongs to the PAPS reductase family. CysD subfamily. Heterodimer composed of CysD, the smaller subunit, and CysN.

It catalyses the reaction sulfate + ATP + H(+) = adenosine 5'-phosphosulfate + diphosphate. It participates in sulfur metabolism; hydrogen sulfide biosynthesis; sulfite from sulfate: step 1/3. Its function is as follows. With CysN forms the ATP sulfurylase (ATPS) that catalyzes the adenylation of sulfate producing adenosine 5'-phosphosulfate (APS) and diphosphate, the first enzymatic step in sulfur assimilation pathway. APS synthesis involves the formation of a high-energy phosphoric-sulfuric acid anhydride bond driven by GTP hydrolysis by CysN coupled to ATP hydrolysis by CysD. The protein is Sulfate adenylyltransferase subunit 2 of Rhodopseudomonas palustris (strain BisB18).